We begin with the raw amino-acid sequence, 133 residues long: MSVNDPIGDMLTRIRNACMARHTTVSMPASNMKEAIARILKREGFIRDYAVIDDGKSHKTITITLKYLPDRRPAITGLRRVSKPGLRIYTKRTDIPRVRGGLGLCILSTPKGVLADHEAWRERVGGEVLCYVW.

This sequence belongs to the universal ribosomal protein uS8 family. As to quaternary structure, part of the 30S ribosomal subunit. Contacts proteins S5 and S12.

Its function is as follows. One of the primary rRNA binding proteins, it binds directly to 16S rRNA central domain where it helps coordinate assembly of the platform of the 30S subunit. This is Small ribosomal subunit protein uS8 from Chloroflexus aurantiacus (strain ATCC 29364 / DSM 637 / Y-400-fl).